A 506-amino-acid chain; its full sequence is Probable malate:quinone oxidoreductase (506 aa).

It belongs to the MQO family. It depends on FAD as a cofactor.

It catalyses the reaction (S)-malate + a quinone = a quinol + oxaloacetate. It participates in carbohydrate metabolism; tricarboxylic acid cycle; oxaloacetate from (S)-malate (quinone route): step 1/1. The sequence is that of Probable malate:quinone oxidoreductase from Rhodococcus jostii (strain RHA1).